The following is a 203-amino-acid chain: Outer-membrane lipoprotein carrier protein (203 aa).

The N-terminal stretch at 1–20 (MKKWLAISCLIAGMTSTAVY) is a signal peptide.

The protein belongs to the LolA family. Monomer.

It localises to the periplasm. Its function is as follows. Participates in the translocation of lipoproteins from the inner membrane to the outer membrane. Only forms a complex with a lipoprotein if the residue after the N-terminal Cys is not an aspartate (The Asp acts as a targeting signal to indicate that the lipoprotein should stay in the inner membrane). This is Outer-membrane lipoprotein carrier protein from Pectobacterium carotovorum subsp. carotovorum (strain PC1).